Consider the following 661-residue polypeptide: Peroxisomal acyl-coenzyme A oxidase 1 (661 aa).

N6-succinyllysine occurs at positions 89 and 90. Residue threonine 139 participates in FAD binding. N6-succinyllysine is present on lysine 159. An FAD-binding site is contributed by glycine 178. N6-acetyllysine is present on lysine 216. At lysine 241 the chain carries N6-succinyllysine. An N6-acetyllysine mark is found at lysine 255, lysine 267, and lysine 272. Lysine 349 is subject to N6-succinyllysine. Glutamate 421 acts as the Proton acceptor in catalysis. 4 positions are modified to N6-acetyllysine; alternate: lysine 437, lysine 446, lysine 512, and lysine 637. N6-succinyllysine; alternate is present on residues lysine 437, lysine 446, lysine 512, and lysine 637. At lysine 643 the chain carries N6-succinyllysine. The residue at position 649 (serine 649) is a Phosphoserine. Lysine 652 is modified (N6-acetyllysine). Position 655 is an N6-succinyllysine (lysine 655). The Microbody targeting signal signature appears at 659–661; the sequence is SKL.

The protein belongs to the acyl-CoA oxidase family. In terms of assembly, homodimer. Interacts with LONP2. FAD is required as a cofactor.

Its subcellular location is the peroxisome. It catalyses the reaction a 2,3-saturated acyl-CoA + O2 = a (2E)-enoyl-CoA + H2O2. It carries out the reaction hexadecanoyl-CoA + O2 = (2E)-hexadecenoyl-CoA + H2O2. The enzyme catalyses dodecanoyl-CoA + O2 = (2E)-dodecenoyl-CoA + H2O2. The catalysed reaction is octanoyl-CoA + O2 = (2E)-octenoyl-CoA + H2O2. It catalyses the reaction decanoyl-CoA + O2 = (2E)-decenoyl-CoA + H2O2. It carries out the reaction tetradecanoyl-CoA + O2 = (2E)-tetradecenoyl-CoA + H2O2. The enzyme catalyses hexadecanedioyl-CoA + O2 = (2E)-hexadecenedioyl-CoA + H2O2. The catalysed reaction is tetracosanoyl-CoA + O2 = (2E)-tetracosenoyl-CoA + H2O2. It catalyses the reaction glutaryl-CoA + O2 = (2E)-glutaconyl-CoA + H2O2. It carries out the reaction hexanoyl-CoA + O2 = (2E)-hexenoyl-CoA + H2O2. The enzyme catalyses octadecanoyl-CoA + O2 = (2E)-octadecenoyl-CoA + H2O2. The catalysed reaction is (5Z,8Z,11Z,14Z,17Z)-eicosapentaenoyl-CoA + O2 = (2E,5Z,8Z,11Z,14Z,17Z)-icosahexaenoyl-CoA + H2O2. It catalyses the reaction (6Z,9Z,12Z,15Z,18Z,21Z)-tetracosahexaenoyl-CoA + O2 = (2E,6Z,9Z,12Z,15Z,18Z,21Z)-tetracosaheptaenoyl-CoA + H2O2. The protein operates within lipid metabolism; peroxisomal fatty acid beta-oxidation. Its function is as follows. Involved in the initial and rate-limiting step of peroxisomal beta-oxidation of straight-chain saturated and unsaturated very-long-chain fatty acids. Catalyzes the desaturation of fatty acyl-CoAs such as palmitoyl-CoA (hexadecanoyl-CoA) to 2-trans-enoyl-CoAs ((2E)-enoyl-CoAs) such as (2E)-hexadecenoyl-CoA, and donates electrons directly to molecular oxygen (O(2)), thereby producing hydrogen peroxide (H(2)O(2)). Isoform 2 shows higher activity with hexadecanoyl-CoA as substrate than isoform 1. This chain is Peroxisomal acyl-coenzyme A oxidase 1 (ACOX1), found in Phascolarctos cinereus (Koala).